Here is a 452-residue protein sequence, read N- to C-terminus: La-related protein 1B (452 aa).

Low complexity predominate over residues 1-22 (MATTASSAANSASRFSIDSSIS). The interval 1–251 (MATTASSAAN…GFSHRNYSGR (251 aa)) is disordered. At alanine 2 the chain carries N-acetylalanine. Positions 44–68 (LSLSQDDPFSAPSVSPPTGNNSSDY) are enriched in polar residues. Composition is skewed to low complexity over residues 99–117 (SWPA…SPSL), 136–163 (ATSN…VNNS), 171–185 (NNNT…NVSN), and 206–223 (SGNF…SYPR). The span at 225–236 (EGLHHGNRRNYE) shows a compositional bias: basic and acidic residues. A compositionally biased stretch (polar residues) spans 237 to 247 (HGNQSGFSHRN). The 90-residue stretch at 328–417 (RNFDAILYNK…RGDWDKYLLP (90 aa)) folds into the HTH La-type RNA-binding domain. The tract at residues 419–452 (EPSRSGPAAGASNNASLVSQIESMTLSERSREGV) is disordered. Residues 422–434 (RSGPAAGASNNAS) show a composition bias toward low complexity. Positions 435-445 (LVSQIESMTLS) are enriched in polar residues.

The protein belongs to the LARP family.

It is found in the cytoplasm. Its function is as follows. Promotes leaf senescence. In Arabidopsis thaliana (Mouse-ear cress), this protein is La-related protein 1B (LARP1B).